The primary structure comprises 226 residues: Chalcone--flavanone isomerase 2-A (226 aa).

The substrate site is built by threonine 49, asparagine 114, and serine 191.

It belongs to the chalcone isomerase family. Mostly expressed in flowers, and, to a lower extent, in roots, shoots, and seeds.

The enzyme catalyses a chalcone = a flavanone.. Its pathway is secondary metabolite biosynthesis; flavonoid biosynthesis. In terms of biological role, catalyzes the intramolecular cyclization of bicyclic chalcones into tricyclic (S)-flavanones. Responsible for the isomerization of 4,2',4',6'-tetrahydroxychalcone (also termed chalcone) into naringenin. This chain is Chalcone--flavanone isomerase 2-A (CHI2-A), found in Glycine max (Soybean).